Here is a 184-residue protein sequence, read N- to C-terminus: Cyclin-dependent kinase inhibitor 1 (184 aa).

Over residues 85–98 (ISSTTLTPLSSPST) the composition is skewed to low complexity. The tract at residues 85–184 (ISSTTLTPLS…IRTRSSCSPY (100 aa)) is disordered.

This sequence belongs to the CDI family. Interacts with cyd-1; the interaction is direct. In terms of tissue distribution, in embryos, expression is first seen in pharyngeal primordium and later in all differentiating cells. Post embryonic expression corresponds to developmental patterns of cell cycle progression in many tissues including sex myoblasts, distal tip cells, vulval cells, seam cells, neurons, intestine cells and hypodermal cells.

The protein localises to the nucleus. Its function is as follows. Negative cell-cycle regulator that functions at the G1-to-S-phase transition. Required for suspension of the cell cycle in dauer larvae and starved L1 larvae. In vulval precursor cells (VPCs), a pathway of heterochronic genes acts via cki-1 to maintain VPCs in G1 during the L2 larval stage. Cul-2 may function in ubiquitin-mediated degradation by targeting cki-1 for degradation. Involved in distal tip cell development by repressing and modulating cye-1/cdk-2 activity levels in Z1.aa/Z4.pp and in Z1.ap/Z4.pa. The polypeptide is Cyclin-dependent kinase inhibitor 1 (Caenorhabditis elegans).